The sequence spans 372 residues: MRKLLASPFSSLLAVVFISVISVVRCCSPKDQTALNAFKSSLSEPNLGIFNTWSENTDCCKEWYGISCDPDSGRVTDISLRGESEDAIFQKAGRSGYMSGSIDPAVCDLTALTSLVLADWKGITGEIPPCITSLASLRILDLAGNKITGEIPAEIGKLSKLAVLNLAENQMSGEIPASLTSLIELKHLELTENGITGVIPADFGSLKMLSRVLLGRNELTGSIPESISGMERLADLDLSKNHIEGPIPEWMGNMKVLSLLNLDCNSLTGPIPGSLLSNSGLDVANLSRNALEGTIPDVFGSKTYLVSLDLSHNSLSGRIPDSLSSAKFVGHLDISHNKLCGRIPTGFPFDHLEATSFSDNQCLCGGPLTTSC.

A signal peptide spans 1–26 (MRKLLASPFSSLLAVVFISVISVVRC). LRR repeat units lie at residues 136–158 (SLRI…IGKL), 160–183 (KLAV…TSLI), 184–205 (ELKH…DFGS), 208–230 (MLSR…ISGM), 232–254 (RLAD…MGNM), 256–277 (VLSL…SLLS), 280–302 (GLDV…FGSK), 304–326 (YLVS…LSSA), and 328–350 (FVGH…FPFD).

This protein is able to complement bacterial recA mutations, but its native function in the plant is not known. In Arabidopsis thaliana (Mouse-ear cress), this protein is DNA damage-repair/toleration protein DRT100 (DRT100).